We begin with the raw amino-acid sequence, 1905 residues long: Low-density lipoprotein receptor-related protein 4 (1905 aa).

The signal sequence occupies residues 1-20; that stretch reads MRRWWGALLLGALLCAHGIA. The Extracellular segment spans residues 21–1725; the sequence is SSLECACGRS…AAPGEGLHVS (1705 aa). LDL-receptor class A domains lie at 26-67, 70-106, 109-144, 147-183, 190-226, 230-266, 269-305, and 311-350; these read ACGR…DGCT, TCSP…QDCP, ECEE…EQCD, KCSD…ESCP, PCNL…SDCS, PCRS…RNCT, MCTA…ENCE, and QCAS…QNCR. Intrachain disulfides connect C27–C44, C34–C57, C51–C66, C71–C83, C78–C96, C90–C105, C110–C122, C117–C135, C129–C143, C148–C160, C155–C173, C167–C182, C191–C203, C198–C216, C210–C225, C231–C243, C238–C256, C250–C265, C270–C282, C277–C295, C289–C304, C312–C324, C319–C337, C331–C349, C358–C369, C365–C378, C380–C393, C399–C409, C405–C418, and C420–C433. The N-linked (GlcNAc...) asparagine glycan is linked to N264. The EGF-like 1; atypical domain occupies 354–394; the sequence is GEENCNVNNGGCAQKCQMVRGAVQCTCHTGYRLTEDGRTCQ. Positions 395 to 434 constitute an EGF-like 2; calcium-binding domain; the sequence is DVNECAEEGYCSQGCTNTEGAFQCWCEAGYELRPDRRSCK. LDL-receptor class B repeat units follow at residues 480–522, 523–565, 566–609, 610–652, and 653–693; these read ELVF…DWVH, DKLY…HPME, GTIY…DYAG, RRMY…FEDS, and LYWT…LHPQ. N498 is a glycosylation site (N-linked (GlcNAc...) asparagine). Residues 698 to 737 form the EGF-like 3 domain; the sequence is GKNRCGDNNGGCTHLCLPSGQNYTCACPTGFRKINSHACA. 3 cysteine pairs are disulfide-bonded: C702/C713, C709/C722, and C724/C736. N-linked (GlcNAc...) asparagine glycosylation occurs at N719. LDL-receptor class B repeat units follow at residues 785–827, 828–870, 871–914, 915–956, and 957–998; these read DHVY…DWVT, NKLY…EPMG, GYMY…DYGS, QRLY…LYGQ, and RIYW…FHRQ. N901 is a glycosylation site (N-linked (GlcNAc...) asparagine). N1077 carries an N-linked (GlcNAc...) asparagine glycan. LDL-receptor class B repeat units lie at residues 1093–1135, 1136–1178, 1179–1222, 1223–1263, 1264–1306, 1397–1439, 1440–1482, 1483–1526, 1527–1568, and 1569–1610; these read GKVY…DAIG, RKVY…YHEM, GFMY…DKTS, SQLL…LLDS, YIYW…DRAQ, GKVY…DWVA, RNLY…FPRK, GYLF…DYDT, RRIY…QDRW, and IYWT…SPQR. N-linked (GlcNAc...) asparagine glycosylation is found at N1415 and N1467. Residues 1661 to 1696 are disordered; the sequence is ATSMNEKSPVLPNTLPTTLHSSTTKTRTSLEGAGGR. Residues 1674 to 1690 are compositionally biased toward low complexity; that stretch reads TLPTTLHSSTTKTRTSL. The helical transmembrane segment at 1726–1746 threads the bilayer; that stretch reads YAIGGLLSILLILLVIAALML. The Cytoplasmic segment spans residues 1747–1905; sequence YRHRKSKFTD…ERKLSSESQV (159 aa). Residues 1852-1905 form a disordered region; it reads ASSGSLDDTETEQLLQEEQSECSSVHTAATPERRGSLPDTGWKHERKLSSESQV. A compositionally biased stretch (basic and acidic residues) spans 1882–1905; that stretch reads PERRGSLPDTGWKHERKLSSESQV.

The protein belongs to the LDLR family. In terms of assembly, homooligomer. Interacts with MUSK; the heterodimer forms an AGRIN receptor complex that binds AGRIN resulting in activation of MUSK. Interacts (via the extracellular domain) with SOST; the interaction facilitates the inhibition of Wnt signaling. Interacts with MESD; the interaction promotes glycosylation of LRP4 and its cell-surface expression. Post-translationally, N-glycosylation is required for cell surface location.

The protein resides in the cell membrane. Its function is as follows. Mediates SOST-dependent inhibition of bone formation. Functions as a specific facilitator of SOST-mediated inhibition of Wnt signaling. Plays a key role in the formation and the maintenance of the neuromuscular junction (NMJ), the synapse between motor neuron and skeletal muscle. Directly binds AGRIN and recruits it to the MUSK signaling complex. Mediates the AGRIN-induced phosphorylation of MUSK, the kinase of the complex. The activation of MUSK in myotubes induces the formation of NMJ by regulating different processes including the transcription of specific genes and the clustering of AChR in the postsynaptic membrane. Alternatively, may be involved in the negative regulation of the canonical Wnt signaling pathway, being able to antagonize the LRP6-mediated activation of this pathway. More generally, has been proposed to function as a cell surface endocytic receptor binding and internalizing extracellular ligands for degradation by lysosomes. Plays an essential role in the process of digit differentiation. The sequence is that of Low-density lipoprotein receptor-related protein 4 (Lrp4) from Mus musculus (Mouse).